The chain runs to 635 residues: Threonine--tRNA ligase (635 aa).

Residues 1–61 (MIKITLKDGK…HKDSSLEILT (61 aa)) enclose the TGS domain. A catalytic region spans residues 242–532 (DHRKLGKELD…LIEQYAGAFP (291 aa)). Residues C333, H384, and H509 each coordinate Zn(2+).

Belongs to the class-II aminoacyl-tRNA synthetase family. As to quaternary structure, homodimer. Zn(2+) serves as cofactor.

Its subcellular location is the cytoplasm. The enzyme catalyses tRNA(Thr) + L-threonine + ATP = L-threonyl-tRNA(Thr) + AMP + diphosphate + H(+). Functionally, catalyzes the attachment of threonine to tRNA(Thr) in a two-step reaction: L-threonine is first activated by ATP to form Thr-AMP and then transferred to the acceptor end of tRNA(Thr). Also edits incorrectly charged L-seryl-tRNA(Thr). The polypeptide is Threonine--tRNA ligase (Clostridium botulinum (strain ATCC 19397 / Type A)).